We begin with the raw amino-acid sequence, 290 residues long: Ubiquinone biosynthesis protein COQ4, mitochondrial (290 aa).

The N-terminal 32 residues, 1–32, are a transit peptide targeting the mitochondrion; it reads MAKRVCVGDLRKLAGSVSTPSRCILPPHARCF. The Zn(2+) site is built by H168, D169, H172, and E184. The segment at 260–290 is disordered; it reads KPPDLREMRKAEREAQKKDKEAKETMTRAAV.

This sequence belongs to the COQ4 family. In terms of assembly, component of a multi-subunit COQ enzyme complex, composed of at least COQ3, COQ4, COQ5, COQ6, COQ7 and COQ9. Zn(2+) serves as cofactor.

It is found in the mitochondrion inner membrane. The enzyme catalyses a 4-hydroxy-3-methoxy-5-(all-trans-polyprenyl)benzoate + H(+) = a 2-methoxy-6-(all-trans-polyprenyl)phenol + CO2. It participates in cofactor biosynthesis; ubiquinone biosynthesis. In terms of biological role, lyase that catalyzes the C1-decarboxylation of 4-hydroxy-3-methoxy-5-(all-trans-polyprenyl)benzoic acid into 2-methoxy-6-(all-trans-polyprenyl)phenol during ubiquinone biosynthesis. The sequence is that of Ubiquinone biosynthesis protein COQ4, mitochondrial from Phaeosphaeria nodorum (strain SN15 / ATCC MYA-4574 / FGSC 10173) (Glume blotch fungus).